Here is a 466-residue protein sequence, read N- to C-terminus: Fumarate hydratase class II (466 aa).

Substrate contacts are provided by residues 99–101 (SGT), 129–132 (HPND), 139–141 (SSN), and Thr187. Catalysis depends on His188, which acts as the Proton donor/acceptor. Ser318 is an active-site residue. Substrate-binding positions include Ser319 and 324–326 (KVN).

The protein belongs to the class-II fumarase/aspartase family. Fumarase subfamily. In terms of assembly, homotetramer.

It is found in the cytoplasm. The catalysed reaction is (S)-malate = fumarate + H2O. It participates in carbohydrate metabolism; tricarboxylic acid cycle; (S)-malate from fumarate: step 1/1. In terms of biological role, involved in the TCA cycle. Catalyzes the stereospecific interconversion of fumarate to L-malate. The chain is Fumarate hydratase class II from Thermus thermophilus (strain ATCC BAA-163 / DSM 7039 / HB27).